We begin with the raw amino-acid sequence, 366 residues long: Cobalt-precorrin-5B C(1)-methyltransferase (366 aa).

The protein belongs to the CbiD family.

It catalyses the reaction Co-precorrin-5B + S-adenosyl-L-methionine = Co-precorrin-6A + S-adenosyl-L-homocysteine. It functions in the pathway cofactor biosynthesis; adenosylcobalamin biosynthesis; cob(II)yrinate a,c-diamide from sirohydrochlorin (anaerobic route): step 6/10. Functionally, catalyzes the methylation of C-1 in cobalt-precorrin-5B to form cobalt-precorrin-6A. This chain is Cobalt-precorrin-5B C(1)-methyltransferase, found in Thermus thermophilus (strain ATCC BAA-163 / DSM 7039 / HB27).